The primary structure comprises 253 residues: tRNA pseudouridine synthase A (253 aa).

D53 acts as the Nucleophile in catalysis. Y112 contacts substrate.

The protein belongs to the tRNA pseudouridine synthase TruA family. As to quaternary structure, homodimer.

The enzyme catalyses uridine(38/39/40) in tRNA = pseudouridine(38/39/40) in tRNA. In terms of biological role, formation of pseudouridine at positions 38, 39 and 40 in the anticodon stem and loop of transfer RNAs. The protein is tRNA pseudouridine synthase A of Lactococcus lactis subsp. cremoris (strain MG1363).